We begin with the raw amino-acid sequence, 930 residues long: Translation initiation factor IF-2 (930 aa).

Residues 50–67 are compositionally biased toward low complexity; the sequence is FKPAAAPKVEAKPAAPKV. Disordered regions lie at residues 50 to 217 and 260 to 346; these read FKPA…SSEE and EVVP…HELP. Basic and acidic residues-rich tracts occupy residues 68–90 and 110–125; these read SAEKKAEKSEPAKPAVAKEEAKP and FKAEREARAKEQAERR. The segment covering 129 to 141 has biased composition (low complexity); the sequence is KGNNRDQQQNGNR. 2 stretches are compositionally biased toward basic and acidic residues: residues 157–167 and 262–295; these read RDNRRFNDQAK and VPEKKEPAVDTRRKKQARPDKNRDDYDHEEDGPR. The span at 309–318 shows a compositional bias: low complexity; the sequence is NQKNSNWNNN. Positions 337 to 346 are enriched in basic and acidic residues; that stretch reads VTERKFHELP. Residues 432–599 enclose the tr-type G domain; sequence ERPPVVTIMG…TVLLVAEIQE (168 aa). The interval 441–448 is G1; it reads GHVDHGKT. 441–448 contacts GTP; the sequence is GHVDHGKT. The interval 466-470 is G2; the sequence is GITQH. A G3 region spans residues 487 to 490; it reads DTPG. GTP-binding positions include 487 to 491 and 541 to 544; these read DTPGH and NKID. Residues 541 to 544 are G4; sequence NKID. Residues 577–579 form a G5 region; it reads SAK.

This sequence belongs to the TRAFAC class translation factor GTPase superfamily. Classic translation factor GTPase family. IF-2 subfamily.

The protein localises to the cytoplasm. In terms of biological role, one of the essential components for the initiation of protein synthesis. Protects formylmethionyl-tRNA from spontaneous hydrolysis and promotes its binding to the 30S ribosomal subunits. Also involved in the hydrolysis of GTP during the formation of the 70S ribosomal complex. The chain is Translation initiation factor IF-2 from Streptococcus pneumoniae (strain P1031).